Here is a 298-residue protein sequence, read N- to C-terminus: GTP cyclohydrolase FolE2 (298 aa).

It belongs to the GTP cyclohydrolase IV family.

It catalyses the reaction GTP + H2O = 7,8-dihydroneopterin 3'-triphosphate + formate + H(+). It participates in cofactor biosynthesis; 7,8-dihydroneopterin triphosphate biosynthesis; 7,8-dihydroneopterin triphosphate from GTP: step 1/1. In terms of biological role, converts GTP to 7,8-dihydroneopterin triphosphate. The protein is GTP cyclohydrolase FolE2 of Xylella fastidiosa (strain M12).